The primary structure comprises 160 residues: Transcription elongation factor GreA (160 aa).

Residues Ser-2–Glu-30 are a coiled coil.

The protein belongs to the GreA/GreB family.

Its function is as follows. Necessary for efficient RNA polymerase transcription elongation past template-encoded arresting sites. The arresting sites in DNA have the property of trapping a certain fraction of elongating RNA polymerases that pass through, resulting in locked ternary complexes. Cleavage of the nascent transcript by cleavage factors such as GreA or GreB allows the resumption of elongation from the new 3'terminus. GreA releases sequences of 2 to 3 nucleotides. This chain is Transcription elongation factor GreA, found in Streptococcus mutans serotype c (strain ATCC 700610 / UA159).